A 336-amino-acid polypeptide reads, in one-letter code: Fructose-1,6-bisphosphatase class 1 (336 aa).

Positions 90, 112, 114, and 115 each coordinate Mg(2+). Substrate is bound by residues 115-118 (DGSS), Asn-211, and Lys-277. Residue Glu-283 participates in Mg(2+) binding.

Belongs to the FBPase class 1 family. In terms of assembly, homotetramer. Requires Mg(2+) as cofactor.

It is found in the cytoplasm. It catalyses the reaction beta-D-fructose 1,6-bisphosphate + H2O = beta-D-fructose 6-phosphate + phosphate. The protein operates within carbohydrate biosynthesis; gluconeogenesis. This Pseudomonas putida (strain ATCC 700007 / DSM 6899 / JCM 31910 / BCRC 17059 / LMG 24140 / F1) protein is Fructose-1,6-bisphosphatase class 1.